The chain runs to 543 residues: CTP synthase (543 aa).

The segment at 1 to 265 (MARYIFITGG…DDEVLAAFGI (265 aa)) is amidoligase domain. Residue Ser-13 participates in CTP binding. Position 13 (Ser-13) interacts with UTP. 14–19 (SLGKGL) serves as a coordination point for ATP. Tyr-54 contributes to the L-glutamine binding site. Asp-71 contacts ATP. The Mg(2+) site is built by Asp-71 and Glu-139. CTP is bound by residues 146-148 (DIE), 186-191 (KTKPTQ), and Lys-222. UTP-binding positions include 186-191 (KTKPTQ) and Lys-222. 238 to 240 (RDV) contributes to the ATP binding site. A Glutamine amidotransferase type-1 domain is found at 291 to 542 (TIAIVGKYTG…IQAAVVQSRL (252 aa)). An L-glutamine-binding site is contributed by Gly-353. The active-site Nucleophile; for glutamine hydrolysis is the Cys-380. L-glutamine-binding positions include 381-384 (FGMQ), Glu-404, and Arg-470. Catalysis depends on residues His-515 and Glu-517.

This sequence belongs to the CTP synthase family. In terms of assembly, homotetramer.

The enzyme catalyses UTP + L-glutamine + ATP + H2O = CTP + L-glutamate + ADP + phosphate + 2 H(+). The catalysed reaction is L-glutamine + H2O = L-glutamate + NH4(+). It catalyses the reaction UTP + NH4(+) + ATP = CTP + ADP + phosphate + 2 H(+). The protein operates within pyrimidine metabolism; CTP biosynthesis via de novo pathway; CTP from UDP: step 2/2. Allosterically activated by GTP, when glutamine is the substrate; GTP has no effect on the reaction when ammonia is the substrate. The allosteric effector GTP functions by stabilizing the protein conformation that binds the tetrahedral intermediate(s) formed during glutamine hydrolysis. Inhibited by the product CTP, via allosteric rather than competitive inhibition. Catalyzes the ATP-dependent amination of UTP to CTP with either L-glutamine or ammonia as the source of nitrogen. Regulates intracellular CTP levels through interactions with the four ribonucleotide triphosphates. This is CTP synthase from Bradyrhizobium sp. (strain BTAi1 / ATCC BAA-1182).